The primary structure comprises 335 residues: Malate dehydrogenase 1 (335 aa).

NAD(+)-binding positions include 11–16 and D35; that span reads GAGNVG. Substrate contacts are provided by R97 and R103. NAD(+) contacts are provided by residues N110 and 133-135; that span reads VTN. The substrate site is built by N135 and R166. H190 serves as the catalytic Proton acceptor.

This sequence belongs to the LDH/MDH superfamily. MDH type 3 family.

The enzyme catalyses (S)-malate + NAD(+) = oxaloacetate + NADH + H(+). Functionally, catalyzes the reversible oxidation of malate to oxaloacetate. The sequence is that of Malate dehydrogenase 1 (mdh1) from Aquifex aeolicus (strain VF5).